We begin with the raw amino-acid sequence, 156 residues long: MSRRHSAEKREIIPDPKYGDVVLTKFMNSIMYEGKKSTAERIVYGAFDIVENRARANPIEVFRAALDNVAPMIEVRSRRVGGATYQVPVEVRTERRQALAIRWLIQAARSRNDRTMVERLSAELLDAANNRGNAVKKREDTHRMAEANRAFSHYRW.

This sequence belongs to the universal ribosomal protein uS7 family. As to quaternary structure, part of the 30S ribosomal subunit. Contacts proteins S9 and S11.

One of the primary rRNA binding proteins, it binds directly to 16S rRNA where it nucleates assembly of the head domain of the 30S subunit. Is located at the subunit interface close to the decoding center, probably blocks exit of the E-site tRNA. The protein is Small ribosomal subunit protein uS7 of Methylobacterium radiotolerans (strain ATCC 27329 / DSM 1819 / JCM 2831 / NBRC 15690 / NCIMB 10815 / 0-1).